The sequence spans 263 residues: Hydroxyacylglutathione hydrolase (263 aa).

Positions 55, 57, 59, 60, 117, 134, and 172 each coordinate Zn(2+).

This sequence belongs to the metallo-beta-lactamase superfamily. Glyoxalase II family. As to quaternary structure, monomer. The cofactor is Zn(2+).

It carries out the reaction an S-(2-hydroxyacyl)glutathione + H2O = a 2-hydroxy carboxylate + glutathione + H(+). The protein operates within secondary metabolite metabolism; methylglyoxal degradation; (R)-lactate from methylglyoxal: step 2/2. Functionally, thiolesterase that catalyzes the hydrolysis of S-D-lactoyl-glutathione to form glutathione and D-lactic acid. The protein is Hydroxyacylglutathione hydrolase of Shewanella baltica (strain OS155 / ATCC BAA-1091).